An 85-amino-acid chain; its full sequence is uncharacterized protein (85 aa).

This is an uncharacterized protein from Saccharomyces cerevisiae (strain ATCC 204508 / S288c) (Baker's yeast).